Here is a 266-residue protein sequence, read N- to C-terminus: Thymidylate synthase (266 aa).

Arginine 24 contacts dUMP. Histidine 54 is a (6R)-5,10-methylene-5,6,7,8-tetrahydrofolate binding site. Residue 129-130 (RR) coordinates dUMP. The active-site Nucleophile is cysteine 149. DUMP contacts are provided by residues 169 to 172 (RSAD), asparagine 180, and 210 to 212 (HIY). Aspartate 172 serves as a coordination point for (6R)-5,10-methylene-5,6,7,8-tetrahydrofolate. (6R)-5,10-methylene-5,6,7,8-tetrahydrofolate is bound at residue alanine 265.

The protein belongs to the thymidylate synthase family. Bacterial-type ThyA subfamily. In terms of assembly, homodimer.

Its subcellular location is the cytoplasm. It catalyses the reaction dUMP + (6R)-5,10-methylene-5,6,7,8-tetrahydrofolate = 7,8-dihydrofolate + dTMP. Its pathway is pyrimidine metabolism; dTTP biosynthesis. In terms of biological role, catalyzes the reductive methylation of 2'-deoxyuridine-5'-monophosphate (dUMP) to 2'-deoxythymidine-5'-monophosphate (dTMP) while utilizing 5,10-methylenetetrahydrofolate (mTHF) as the methyl donor and reductant in the reaction, yielding dihydrofolate (DHF) as a by-product. This enzymatic reaction provides an intracellular de novo source of dTMP, an essential precursor for DNA biosynthesis. The sequence is that of Thymidylate synthase from Mycolicibacterium paratuberculosis (strain ATCC BAA-968 / K-10) (Mycobacterium paratuberculosis).